Reading from the N-terminus, the 658-residue chain is UvrABC system protein B (658 aa).

Positions 25–416 (KSLKNNNHYQ…QKNVAEQIIR (392 aa)) constitute a Helicase ATP-binding domain. Residue 38-45 (GVTGSGKT) participates in ATP binding. The Beta-hairpin motif lies at 91-114 (HFDYYQPESYIPRRDLFIEKDSSI). The Helicase C-terminal domain occupies 433-607 (QVQDLFDEIK…ELKLRDDEIK (175 aa)). The region spanning 623–658 (EKIIKELDKKMRERAKNLDFEEAMRLRDEIAQLRTL) is the UVR domain.

This sequence belongs to the UvrB family. In terms of assembly, forms a heterotetramer with UvrA during the search for lesions. Interacts with UvrC in an incision complex.

Its subcellular location is the cytoplasm. Its function is as follows. The UvrABC repair system catalyzes the recognition and processing of DNA lesions. A damage recognition complex composed of 2 UvrA and 2 UvrB subunits scans DNA for abnormalities. Upon binding of the UvrA(2)B(2) complex to a putative damaged site, the DNA wraps around one UvrB monomer. DNA wrap is dependent on ATP binding by UvrB and probably causes local melting of the DNA helix, facilitating insertion of UvrB beta-hairpin between the DNA strands. Then UvrB probes one DNA strand for the presence of a lesion. If a lesion is found the UvrA subunits dissociate and the UvrB-DNA preincision complex is formed. This complex is subsequently bound by UvrC and the second UvrB is released. If no lesion is found, the DNA wraps around the other UvrB subunit that will check the other stand for damage. The chain is UvrABC system protein B from Helicobacter pylori (strain J99 / ATCC 700824) (Campylobacter pylori J99).